Consider the following 131-residue polypeptide: Agouti-signaling protein (131 aa).

The signal sequence occupies residues 1 to 20; sequence MNIFRLLLATLLVSLCFLTA. N-linked (GlcNAc...) asparagine glycosylation is present at Asn-38. Residues 57–104 are disordered; it reads KSKKISRKEAEKKRSSKKKASMKNVARPRPPPPNPCVATRNSCKSPAP. 5 cysteine pairs are disulfide-bonded: Cys-92–Cys-107, Cys-99–Cys-113, Cys-106–Cys-124, Cys-110–Cys-131, and Cys-115–Cys-122. The Agouti domain occupies 92 to 131; that stretch reads CVATRNSCKSPAPACCDPCASCQCRFFRSACTCRVLSPSC.

It localises to the secreted. Functionally, involved in the regulation of melanogenesis. The binding of ASP to MC1R precludes alpha-MSH initiated signaling and thus blocks production of cAMP, leading to a down-regulation of eumelanogenesis (brown/black pigment) and thus increasing synthesis of pheomelanin (yellow/red pigment). The chain is Agouti-signaling protein (ASIP) from Vulpes vulpes (Red fox).